The following is a 265-amino-acid chain: Zinc transporter ZupT (265 aa).

The next 8 helical transmembrane spans lie at 6–26 (IAFAFSLVLLSGLSTSIGGAL), 37–57 (FMAAALGLSAGVMLYVSFMEI), 77–97 (WTMMGAFFAGIAIITIIDRLV), 122–142 (GMFTAFALAIHNFPEGFATFL), 150–170 (IAIPVAVAIAIHNIPEGIAVA), 184–204 (FWWATLSGLAEPLGALIGFAL), 208–228 (FIGPMTFGISFAVIAGIMVFI), and 245–265 (CAIYGLIAGMAVMAVSLALFI). Residues asparagine 133 and glutamate 136 each coordinate Fe(2+). Residues glutamate 136 and histidine 161 each coordinate Zn(2+). Positions 162, 165, and 194 each coordinate Fe(2+). Glutamate 165 lines the Zn(2+) pocket.

Belongs to the ZIP transporter (TC 2.A.5) family. ZupT subfamily.

It localises to the cell membrane. It carries out the reaction Zn(2+)(in) = Zn(2+)(out). Its function is as follows. Mediates zinc uptake. May also transport other divalent cations. The polypeptide is Zinc transporter ZupT (Corynebacterium aurimucosum (strain ATCC 700975 / DSM 44827 / CIP 107346 / CN-1) (Corynebacterium nigricans)).